We begin with the raw amino-acid sequence, 427 residues long: Enolase (427 aa).

Residue glutamine 163 coordinates (2R)-2-phosphoglycerate. The active-site Proton donor is the glutamate 205. Mg(2+)-binding residues include aspartate 242, glutamate 285, and aspartate 312. Positions 337, 366, 367, and 388 each coordinate (2R)-2-phosphoglycerate. Catalysis depends on lysine 337, which acts as the Proton acceptor.

It belongs to the enolase family. Mg(2+) is required as a cofactor.

It is found in the cytoplasm. Its subcellular location is the secreted. It localises to the cell surface. It carries out the reaction (2R)-2-phosphoglycerate = phosphoenolpyruvate + H2O. The protein operates within carbohydrate degradation; glycolysis; pyruvate from D-glyceraldehyde 3-phosphate: step 4/5. In terms of biological role, catalyzes the reversible conversion of 2-phosphoglycerate (2-PG) into phosphoenolpyruvate (PEP). It is essential for the degradation of carbohydrates via glycolysis. The sequence is that of Enolase from Herminiimonas arsenicoxydans.